We begin with the raw amino-acid sequence, 115 residues long: Large ribosomal subunit protein P2 (115 aa).

Residue M1 is modified to N-acetylmethionine. 2 positions are modified to phosphoserine: S17 and S19. K21 is modified (N6-acetyllysine; alternate). K21 is subject to N6-succinyllysine; alternate. The segment covering 69–90 (GAXAVAAAPGSXAPAAGSAPAA) has biased composition (low complexity). The interval 69–115 (GAXAVAAAPGSXAPAAGSAPAAAEEKKEEKKEESEESDDDMGFGLFD) is disordered. Residues S79 and S86 each carry the phosphoserine modification. The span at 91 to 101 (AEEKKEEKKEE) shows a compositional bias: basic and acidic residues. A phosphoserine mark is found at S102 and S105.

It belongs to the eukaryotic ribosomal protein P1/P2 family. Heterodimer with RPLP1 at the lateral ribosomal stalk of the large ribosomal subunit.

Plays an important role in the elongation step of protein synthesis. This is Large ribosomal subunit protein P2 (RPLP2) from Sus scrofa (Pig).